The chain runs to 360 residues: GTPase Obg (360 aa).

One can recognise an Obg domain in the interval 1-156 (MFVDSVEIII…KCVRLELKLI (156 aa)). An OBG-type G domain is found at 157-360 (ADIGLVGFPN…LKFVLLEALP (204 aa)). GTP contacts are provided by residues 163 to 170 (GFPNAGKS), 188 to 192 (FTTLV), 210 to 213 (DIPG), 279 to 282 (NKCD), and 341 to 343 (SAV). Mg(2+) contacts are provided by S170 and T190.

The protein belongs to the TRAFAC class OBG-HflX-like GTPase superfamily. OBG GTPase family. In terms of assembly, monomer. Requires Mg(2+) as cofactor.

The protein resides in the cytoplasm. Its function is as follows. An essential GTPase which binds GTP, GDP and possibly (p)ppGpp with moderate affinity, with high nucleotide exchange rates and a fairly low GTP hydrolysis rate. Plays a role in control of the cell cycle, stress response, ribosome biogenesis and in those bacteria that undergo differentiation, in morphogenesis control. The protein is GTPase Obg of Helicobacter acinonychis (strain Sheeba).